The sequence spans 193 residues: GYLSLPADTPEVAAAKVAHFAAYNAAAARSAGVVAVAPSYGYAAYGPANIVIGADGVPLDTPEVAARKAADAVAHARAAAGLPAVGPVPAAVVPAVVGSVPADTPEVAAAKVAHAAAHVEANVRNAAEAVGIHGLYGVVPSVYSYGVVPGAYSVHYDGTLLTPDGVPLDTPAVAAGKVANAVAHIKAKSGLIV.

In terms of biological role, component of the cuticle of migratory locust which contains more than 100 different structural proteins. This chain is Cuticle protein 18.7, found in Locusta migratoria (Migratory locust).